A 50-amino-acid polypeptide reads, in one-letter code: Major pollen allergen Ole e 6 (50 aa).

Disulfide bonds link Cys-8–Cys-34, Cys-12–Cys-30, and Cys-16–Cys-26.

Expressed in pollen.

This is Major pollen allergen Ole e 6 (OLE6) from Olea europaea (Common olive).